The chain runs to 388 residues: Trans-enoyl reductase tenC (388 aa).

Residue 51–54 (VDGK) coordinates NADP(+). 142–149 (VGIASVGM) is a substrate binding site. Residues 219–222 (SSES), tyrosine 237, and 284–285 (LD) contribute to the NADP(+) site. 304 to 308 (SFTQF) is a substrate binding site. Residue 373–374 (IK) participates in NADP(+) binding.

The protein belongs to the zinc-containing alcohol dehydrogenase family. As to quaternary structure, monomer.

Its pathway is secondary metabolite biosynthesis. Its function is as follows. Trans-enoyl reductase; part of the gene cluster that mediates the biosynthesis of tenellin-type 2-pyridones, iron-chelating compounds involved in iron stress tolerance, competition with the natural competitor fungus Metarhizium robertsii and insect hosts infection. TenC collaborates with the hybrid PKS-NRPS synthetase tenS to catalyze the assembly of the polyketide-amino acid backbone, since tenS lacks a designated enoylreductase (ER) domain. Upon formation of the polyketide backbone on the thiotemplate of tenS, the triketide is transferred to the NRPS module and linked to tyrosine to produce the pyrrolidine-2-dione intermediates, including pretellinin A, 11-hydropretellenin A, 12-hydropretellenin A, 13-hydropretellenin A, 14-hydropretellenin A, 12-oxopretellenin A and prototellinin D. The pathway begins with the assembly of the polyketide-amino acid backbone by the hybrid PKS-NRPS tenS with the help of the enoyl reductase tenC. These enzymes catalyze the synthesis of the pyrrolidine-2-dione intermediates pretellinin A, 11-hydropretellenin A, 12-hydropretellenin A, 13-hydropretellenin A, 14-hydropretellenin A, 12-oxopretellenin A and prototellinin D. The cytochrome P450 monooxygenase tenA then catalyzes an oxidative ring expansion of pretenellin A and 14-hydropretellenin A to form the 2-pyridone core, leading to pretenellin B and pyridovericin, respectively. The cytochrome P450 monooxygenase tenB is then required for the selective N-hydroxylation of the 2-pyridone nitrogen of yield tellinin and 15-hydroxytellenin (15-HT), respectively. The UDP-glucosyltransferase GT1 and the methyltransferase MT1, located outside the tenS gene cluster, contribute to the stepwise glycosylation and methylation of 15-HT to obtain the glycoside pyridovericin-N-O-(4-O-methyl-beta-D-glucopyranoside) (PMGP). Additional related compounds such as 1-O-methyl-15-HT, (8Z)-1-O-methyl-15-HT, and O-methyltenellin A are also produced but the enzymes involved in their biosynthesis have still to be determined. This chain is Trans-enoyl reductase tenC, found in Beauveria bassiana (strain ARSEF 2860) (White muscardine disease fungus).